We begin with the raw amino-acid sequence, 269 residues long: Gap junction gamma-3 protein (269 aa).

Over 1 to 33 (MLLLELPIKCRMCGRFLRQLLAQESQHSTPVGR) the chain is Extracellular. Residues 34 to 54 (FLLPMLMGFRLLILVSSGPGV) traverse the membrane as a helical segment. Residues 55-86 (FGNDENEFICHLGQPGCKTICYDVFRPLSPLR) lie on the Cytoplasmic side of the membrane. A helical transmembrane segment spans residues 87–107 (FWAFQVILMAVPSAIYVAFTL). At 108–145 (YHVIGYWEVPGKENKEQETQISKGDHSKDVSGAKSLKL) the chain is on the extracellular side. The helical transmembrane segment at 146-166 (LWAYVAHLGVRLALEGAALGV) threads the bilayer. At 167 to 205 (QYNLYGFKMSSTFICREDPCIGSTTCFQSHPSEKTIFLN) the chain is on the cytoplasmic side. The chain crosses the membrane as a helical span at residues 206 to 226 (IMFGISGACFLFIFLELALLG). Residues 227 to 269 (LGRFWRIYKHKLSFLKKLPTSESSVRSKDTTDELSVVEAKEPF) lie on the Extracellular side of the membrane. Serine 261 carries the phosphoserine modification.

Belongs to the connexin family. Gamma-type subfamily. In terms of assembly, a connexon is composed of a hexamer of connexins. As to expression, CNS specific. Expression is restricted to brain, spinal cord, and sciatic nerve.

It localises to the cell membrane. The protein localises to the cell junction. Its subcellular location is the gap junction. In terms of biological role, one gap junction consists of a cluster of closely packed pairs of transmembrane channels, the connexons, through which materials of low MW diffuse from one cell to a neighboring cell. The chain is Gap junction gamma-3 protein (Gjc3) from Mus musculus (Mouse).